The chain runs to 126 residues: Large ribosomal subunit protein bL20 (126 aa).

The protein belongs to the bacterial ribosomal protein bL20 family.

In terms of biological role, binds directly to 23S ribosomal RNA and is necessary for the in vitro assembly process of the 50S ribosomal subunit. It is not involved in the protein synthesizing functions of that subunit. This is Large ribosomal subunit protein bL20 from Acholeplasma laidlawii (strain PG-8A).